The following is a 356-amino-acid chain: Probable cysteine protease RDL6 (356 aa).

The signal sequence occupies residues 1–26 (MGFVRPVCMTILFLLIVFVLSAPSSA). A propeptide spans 27-132 (MDLPATSGGH…RRYVPLAGDQ (106 aa)) (activation peptide). Residues Asn37 and Asn86 are each glycosylated (N-linked (GlcNAc...) asparagine). Cystine bridges form between Cys154/Cys195, Cys188/Cys229, and Cys288/Cys339. Cys157 is a catalytic residue. Residues His294 and Asn314 contribute to the active site.

Belongs to the peptidase C1 family.

In terms of biological role, probable thiol protease. This Arabidopsis thaliana (Mouse-ear cress) protein is Probable cysteine protease RDL6.